Consider the following 621-residue polypeptide: DNA mismatch repair protein MutL (621 aa).

It belongs to the DNA mismatch repair MutL/HexB family.

Its function is as follows. This protein is involved in the repair of mismatches in DNA. It is required for dam-dependent methyl-directed DNA mismatch repair. May act as a 'molecular matchmaker', a protein that promotes the formation of a stable complex between two or more DNA-binding proteins in an ATP-dependent manner without itself being part of a final effector complex. The polypeptide is DNA mismatch repair protein MutL (Xylella fastidiosa (strain M12)).